The following is a 415-amino-acid chain: Multidrug resistance protein MdtA (415 aa).

Residues 1 to 21 form the signal peptide; it reads MKGSYKSRWVIVIVVVIAAIA. 2 disordered regions span residues 32–59 and 392–415; these read SRSAAPGATKQAQQSPAGGRRGMRSGPL and EAQSATTSEEKATSREYAKKGARS. The span at 399 to 415 shows a compositional bias: basic and acidic residues; sequence SEEKATSREYAKKGARS.

The protein belongs to the membrane fusion protein (MFP) (TC 8.A.1) family. As to quaternary structure, part of a tripartite efflux system composed of MdtA, MdtB and MdtC.

The protein localises to the cell inner membrane. Its function is as follows. The MdtABC tripartite complex confers resistance against novobiocin and deoxycholate. This chain is Multidrug resistance protein MdtA, found in Escherichia coli (strain SMS-3-5 / SECEC).